The chain runs to 242 residues: MSSPQPPRFDGQRWSNADDDRIEVLPADPAWPQHFAAEAEAIRTALALPGLGIEHVGSTAVPGLDAKPIIDILLLPPPGHDPQRLVAPLEGLGYQFWRENPNTQRMFFVKGMPPFGHGRTHHVHVMPLAQADRYLLFRDWLRNHPDDARLYAETKHALARRYPTDREAYTRGKDEVVARILGRALAATRHPMIQSGLVRGEREMHARELRETLVAGAESTPGGPADTAYFESLRSRVSKPQD.

The segment at 215–242 is disordered; sequence AGAESTPGGPADTAYFESLRSRVSKPQD.

Belongs to the UPF0157 (GrpB) family.

The protein is UPF0157 protein PA4798 of Pseudomonas aeruginosa (strain ATCC 15692 / DSM 22644 / CIP 104116 / JCM 14847 / LMG 12228 / 1C / PRS 101 / PAO1).